The primary structure comprises 496 residues: T-cell activation inhibitor, mitochondrial (496 aa).

The stretch at 404-437 (KAQQARENMKRKEELKVIENELIQASTKKFSLEK) forms a coiled coil.

Its subcellular location is the mitochondrion. Functionally, may regulate T-cell apoptosis. In Homo sapiens (Human), this protein is T-cell activation inhibitor, mitochondrial (TCAIM).